A 60-amino-acid chain; its full sequence is MAVPARHTSKAKKNKRRTHYKLTAPSVQFDETTGDYSRSHRVSLKGYYKGRKIAKANEAK.

Residues 1 to 22 (MAVPARHTSKAKKNKRRTHYKL) form a disordered region. A compositionally biased stretch (basic residues) spans 7-20 (HTSKAKKNKRRTHY).

The protein belongs to the bacterial ribosomal protein bL32 family.

This chain is Large ribosomal subunit protein bL32, found in Streptococcus pyogenes serotype M3 (strain ATCC BAA-595 / MGAS315).